Here is a 106-residue protein sequence, read N- to C-terminus: uncharacterized protein (106 aa).

Residues 78-98 traverse the membrane as a helical segment; the sequence is LAITGYVVSIPIVLPILIIFI.

Its subcellular location is the membrane. This is an uncharacterized protein from Haemophilus influenzae (strain ATCC 51907 / DSM 11121 / KW20 / Rd).